The following is a 170-amino-acid chain: Protein-export protein SecB (170 aa).

Belongs to the SecB family. In terms of assembly, homotetramer, a dimer of dimers. One homotetramer interacts with 1 SecA dimer.

Its subcellular location is the cytoplasm. Its function is as follows. One of the proteins required for the normal export of preproteins out of the cell cytoplasm. It is a molecular chaperone that binds to a subset of precursor proteins, maintaining them in a translocation-competent state. It also specifically binds to its receptor SecA. This chain is Protein-export protein SecB, found in Xanthomonas campestris pv. campestris (strain 8004).